A 414-amino-acid chain; its full sequence is 3-phosphoshikimate 1-carboxyvinyltransferase (414 aa).

Residues lysine 20, serine 21, and arginine 25 each coordinate 3-phosphoshikimate. Position 20 (lysine 20) interacts with phosphoenolpyruvate. Residues glycine 88 and arginine 116 each contribute to the phosphoenolpyruvate site. Threonine 157, serine 158, glutamine 159, serine 183, aspartate 297, and lysine 324 together coordinate 3-phosphoshikimate. Glutamine 159 serves as a coordination point for phosphoenolpyruvate. Aspartate 297 (proton acceptor) is an active-site residue. Phosphoenolpyruvate is bound by residues arginine 328, arginine 369, and lysine 395.

The protein belongs to the EPSP synthase family. In terms of assembly, monomer.

Its subcellular location is the cytoplasm. It catalyses the reaction 3-phosphoshikimate + phosphoenolpyruvate = 5-O-(1-carboxyvinyl)-3-phosphoshikimate + phosphate. It functions in the pathway metabolic intermediate biosynthesis; chorismate biosynthesis. Functionally, catalyzes the transfer of the enolpyruvyl moiety of phosphoenolpyruvate (PEP) to the 5-hydroxyl of shikimate-3-phosphate (S3P) to produce enolpyruvyl shikimate-3-phosphate and inorganic phosphate. This chain is 3-phosphoshikimate 1-carboxyvinyltransferase, found in Caldivirga maquilingensis (strain ATCC 700844 / DSM 13496 / JCM 10307 / IC-167).